Here is a 294-residue protein sequence, read N- to C-terminus: MTKKVFDDISRLALKALLYEVSLSPKPGLVDQLDNGAHDDMSFLTFVDSALALAPFFKIYLDIGFYHAKEDPGLIFERLRASGIEAEQAMFSATKGVNTHKGVNFSLALLLGATGMYLADQPQLLDHVTAFTEEDSLAICQLVKPLTAHLLETDFGSLDLKKELTYGEKLFLDYGIKGPRGEASEGYPTIAHKALPFLRKSLRSTDQETAQLQLLVYLMSIVEDGNLIHRGGIKAWRQVKQDMLLLHNSSLSTADLKAALSAYNDKLIQKNLSPGGTADLLVLSLYFAFLENQL.

This sequence belongs to the CitG/MdcB family.

The enzyme catalyses 3'-dephospho-CoA + ATP = 2'-(5''-triphospho-alpha-D-ribosyl)-3'-dephospho-CoA + adenine. This is Probable 2-(5''-triphosphoribosyl)-3'-dephosphocoenzyme-A synthase from Streptococcus equi subsp. equi (strain 4047).